The sequence spans 310 residues: Acetyl-coenzyme A carboxylase carboxyl transferase subunit beta (310 aa).

The region spanning 27–296 (LWRKCPNCEA…QDRDAEPDDT (270 aa)) is the CoA carboxyltransferase N-terminal domain. Residues Cys-31, Cys-34, Cys-50, and Cys-53 each coordinate Zn(2+). Residues 31-53 (CPNCEAVLYLPELERHQSVCPKC) form a C4-type zinc finger. A disordered region spans residues 282–310 (THQPHQDRDAEPDDTASQSTLDEFSQADH).

The protein belongs to the AccD/PCCB family. Acetyl-CoA carboxylase is a heterohexamer composed of biotin carboxyl carrier protein (AccB), biotin carboxylase (AccC) and two subunits each of ACCase subunit alpha (AccA) and ACCase subunit beta (AccD). Zn(2+) serves as cofactor.

The protein localises to the cytoplasm. The enzyme catalyses N(6)-carboxybiotinyl-L-lysyl-[protein] + acetyl-CoA = N(6)-biotinyl-L-lysyl-[protein] + malonyl-CoA. Its pathway is lipid metabolism; malonyl-CoA biosynthesis; malonyl-CoA from acetyl-CoA: step 1/1. In terms of biological role, component of the acetyl coenzyme A carboxylase (ACC) complex. Biotin carboxylase (BC) catalyzes the carboxylation of biotin on its carrier protein (BCCP) and then the CO(2) group is transferred by the transcarboxylase to acetyl-CoA to form malonyl-CoA. The polypeptide is Acetyl-coenzyme A carboxylase carboxyl transferase subunit beta (Chromohalobacter salexigens (strain ATCC BAA-138 / DSM 3043 / CIP 106854 / NCIMB 13768 / 1H11)).